The primary structure comprises 386 residues: Phosphate acyltransferase (386 aa).

The tract at residues 359 to 386 (PHRARQDELGENKVVGADQSMTAKATGT) is disordered. Over residues 377–386 (QSMTAKATGT) the composition is skewed to polar residues.

The protein belongs to the PlsX family. Homodimer. Probably interacts with PlsY.

It localises to the cytoplasm. The catalysed reaction is a fatty acyl-[ACP] + phosphate = an acyl phosphate + holo-[ACP]. It participates in lipid metabolism; phospholipid metabolism. Functionally, catalyzes the reversible formation of acyl-phosphate (acyl-PO(4)) from acyl-[acyl-carrier-protein] (acyl-ACP). This enzyme utilizes acyl-ACP as fatty acyl donor, but not acyl-CoA. In Beijerinckia indica subsp. indica (strain ATCC 9039 / DSM 1715 / NCIMB 8712), this protein is Phosphate acyltransferase.